The primary structure comprises 552 residues: Hydroxylamine reductase (552 aa).

[2Fe-2S] cluster is bound by residues C3, C6, C18, and C25. 8 residues coordinate hybrid [4Fe-2O-2S] cluster: H250, E274, C318, C406, C434, C459, E493, and K495. C406 is modified (cysteine persulfide).

This sequence belongs to the HCP family. Requires [2Fe-2S] cluster as cofactor. It depends on hybrid [4Fe-2O-2S] cluster as a cofactor.

Its subcellular location is the cytoplasm. It carries out the reaction A + NH4(+) + H2O = hydroxylamine + AH2 + H(+). Functionally, catalyzes the reduction of hydroxylamine to form NH(3) and H(2)O. This is Hydroxylamine reductase from Shewanella sediminis (strain HAW-EB3).